A 146-amino-acid chain; its full sequence is Hemoglobin subunit beta (146 aa).

V1 is modified (N-acetylvaline). The Globin domain occupies 2–146 (HLTGEEKSLV…VANALAHKYH (145 aa)). T12 bears the Phosphothreonine mark. S44 carries the post-translational modification Phosphoserine. K59 carries the N6-acetyllysine modification. H63 is a binding site for heme b. Residue K82 is modified to N6-acetyllysine. H92 serves as a coordination point for heme b. The residue at position 93 (C93) is an S-nitrosocysteine. An N6-acetyllysine modification is found at K144.

It belongs to the globin family. As to quaternary structure, heterotetramer of two alpha chains and two beta chains. In terms of tissue distribution, red blood cells.

In terms of biological role, involved in oxygen transport from the lung to the various peripheral tissues. The protein is Hemoglobin subunit beta (HBB) of Ursus maritimus (Polar bear).